The sequence spans 146 residues: MAIYGIGTDVVQISRIAAVLERTGGRFAEKVLGPDELRVFHARRARSEARGIAFLATRFSAKEAFSKAIGLGMHWPMTWRALQTLNQRSGEPYVVASGELADWLAARGITARVTVSDERDYAVSFVVAETDVAPPPAPAPVSRTTP.

Positions 9 and 63 each coordinate Mg(2+).

Belongs to the P-Pant transferase superfamily. AcpS family. Requires Mg(2+) as cofactor.

The protein resides in the cytoplasm. The catalysed reaction is apo-[ACP] + CoA = holo-[ACP] + adenosine 3',5'-bisphosphate + H(+). Its function is as follows. Transfers the 4'-phosphopantetheine moiety from coenzyme A to a Ser of acyl-carrier-protein. In Burkholderia ambifaria (strain MC40-6), this protein is Holo-[acyl-carrier-protein] synthase.